Here is a 354-residue protein sequence, read N- to C-terminus: MPRRSLHAAAVLLLVILKEQPSSPAPVNGSKWTYFGPDGENSWSKKYPSCGGLLQSPIDLHSDILQYDASLTPLEFQGYNLSANKQFLLTNNGHSVKLNLPSDMHIQGLQSRYSATQLHLHWGNPNDPHGSEHTVSGQHFAAELHIVHYNSDLYPDASTASNKSEGLAVLAVLIEMGSFNPSYDKIFSHLQHVKYKGQEAFVPGFNIEELLPERTAEYYRYRGSLTTPPCNPTVLWTVFRNPVQISQEQLLALETALYCTHMDDPSPREMINNFRQVQKFDERLVYTSFSQVQVCTAAGLSLGIILSLALAGILGICIVVVVSIWLFRRKSIKKGDNKGVIYKPATKMETEAHA.

Residues 1 to 24 (MPRRSLHAAAVLLLVILKEQPSSP) form the signal peptide. The Extracellular segment spans residues 25–301 (APVNGSKWTY…VQVCTAAGLS (277 aa)). N-linked (GlcNAc...) asparagine glycosylation is found at Asn-28 and Asn-80. An Alpha-carbonic anhydrase domain is found at 30-289 (SKWTYFGPDG…FDERLVYTSF (260 aa)). Residues Cys-50 and Cys-230 are joined by a disulfide bond. His-94 acts as the Proton donor/acceptor in catalysis. His-119, His-121, and His-145 together coordinate Zn(2+). N-linked (GlcNAc...) asparagine glycosylation occurs at Asn-162. 226 to 227 (TT) contacts substrate. A helical membrane pass occupies residues 302–322 (LGIILSLALAGILGICIVVVV). The Cytoplasmic portion of the chain corresponds to 323–354 (SIWLFRRKSIKKGDNKGVIYKPATKMETEAHA).

Belongs to the alpha-carbonic anhydrase family. Homodimer. Zn(2+) serves as cofactor. In terms of tissue distribution, highly expressed in colon, kidney, prostate, intestine and activated lymphocytes. Expressed at much higher levels in the renal cell cancers than in surrounding normal kidney tissue. Moderately expressed in pancreas, ovary and testis. Expressed in sweat glands and bronchiolar epithelium.

It is found in the membrane. It localises to the cell membrane. The enzyme catalyses hydrogencarbonate + H(+) = CO2 + H2O. Its activity is regulated as follows. Inhibited by coumarins, saccharin, sulfonamide derivatives such as acetazolamide (AZA), benzenesulfonamide and derivatives (4-carboxyethylbenzene-sulfonamide, 4-carboxyethylbenzene-sulfonamide ethyl ester, 4-(acetyl-2-aminoethyl)benzene-sulfonamide, 4-aminoethylbenzene-sulfonamide) and Foscarnet (phosphonoformate trisodium salt). Its function is as follows. Reversible hydration of carbon dioxide. The sequence is that of Carbonic anhydrase 12 from Homo sapiens (Human).